A 271-amino-acid polypeptide reads, in one-letter code: DNA repair protein RecO (271 aa).

The span at 249 to 264 (VRVEDSVRQDGDRDST) shows a compositional bias: basic and acidic residues. Residues 249–271 (VRVEDSVRQDGDRDSTTRTSSPA) are disordered.

Belongs to the RecO family.

Its function is as follows. Involved in DNA repair and RecF pathway recombination. The protein is DNA repair protein RecO of Rhodococcus jostii (strain RHA1).